Reading from the N-terminus, the 79-residue chain is Small polypeptide DEVIL 8 (79 aa).

The segment covering methionine 1–leucine 12 has biased composition (polar residues). Residues methionine 1–lysine 37 form a disordered region. Residue asparagine 26 is glycosylated (N-linked (GlcNAc...) asparagine). The tract at residues glycine 39–aspartate 70 is required for DVL/RTFL small polypeptide activity. Residues phenylalanine 55–histidine 71 form a helical membrane-spanning segment. N-linked (GlcNAc...) asparagine glycosylation occurs at asparagine 74.

This sequence belongs to the DVL/RTFL small polypeptides family.

It is found in the cell membrane. Its function is as follows. Small polypeptide acting as a regulatory molecule which coordinates cellular responses required for differentiation, growth and development, probably by restricting polar cell proliferation in lateral organs and coordinating socket cell recruitment and differentiation at trichome sites. This chain is Small polypeptide DEVIL 8, found in Arabidopsis thaliana (Mouse-ear cress).